The following is a 243-amino-acid chain: DNA repair protein RecO (243 aa).

This sequence belongs to the RecO family.

Its function is as follows. Involved in DNA repair and RecF pathway recombination. This is DNA repair protein RecO from Vibrio parahaemolyticus serotype O3:K6 (strain RIMD 2210633).